The following is a 545-amino-acid chain: Cleavage and polyadenylation specificity factor subunit 6 (545 aa).

The segment at Ile37 to Pro69 is disordered. One can recognise an RRM domain in the interval Ile81–Lys161. Positions Ser165–Met180 are enriched in polar residues. 2 disordered regions span residues Ser165–Glu404 and Tyr478–Arg545. Over residues Gly184–Pro200 the composition is skewed to gly residues. Pro residues-rich tracts occupy residues Pro220 to Phe230, Pro237 to Gly265, Pro287 to Asn363, and Gly372 to Pro383. 2 stretches are compositionally biased toward basic and acidic residues: residues Pro384–Ala397 and Gly483–Arg497. A compositionally biased stretch (basic residues) spans Glu498–Arg508. Positions Asp509–Arg545 are enriched in basic and acidic residues.

The protein belongs to the RRM CPSF6/7 family. In terms of assembly, component of the cleavage factor Im (CFIm) complex.

The protein localises to the nucleus. Its subcellular location is the nucleoplasm. It localises to the nucleus speckle. It is found in the cytoplasm. Functionally, component of the cleavage factor Im (CFIm) complex that functions as an activator of the pre-mRNA 3'-end cleavage and polyadenylation processing required for the maturation of pre-mRNA into functional mRNAs. CFIm contributes to the recruitment of multiprotein complexes on specific sequences on the pre-mRNA 3'-end, so called cleavage and polyadenylation signals (pA signals). Most pre-mRNAs contain multiple pA signals, resulting in alternative cleavage and polyadenylation (APA) producing mRNAs with variable 3'-end formation. The CFIm complex acts as a key regulator of cleavage and polyadenylation site choice during APA through its binding to 5'-UGUA-3' elements localized in the 3'-untranslated region (UTR) for a huge number of pre-mRNAs. Plays a role in mRNA export. The protein is Cleavage and polyadenylation specificity factor subunit 6 of Danio rerio (Zebrafish).